The sequence spans 460 residues: uncharacterized protein (460 aa).

A TRAM domain is found at 6–64 (PVKKNNDYEIYIDDFGNMGEGIGKIDNFTVFVKDAVKGEKVRAKIIKVNKSFAIGKLID). [4Fe-4S] cluster-binding residues include Cys77, Cys83, Cys86, and Cys166. 4 residues coordinate S-adenosyl-L-methionine: Gln290, Tyr319, Glu340, and Asp388. The active-site Nucleophile is the Cys415.

Belongs to the class I-like SAM-binding methyltransferase superfamily. RNA M5U methyltransferase family.

This is an uncharacterized protein from Clostridium acetobutylicum (strain ATCC 824 / DSM 792 / JCM 1419 / IAM 19013 / LMG 5710 / NBRC 13948 / NRRL B-527 / VKM B-1787 / 2291 / W).